A 53-amino-acid polypeptide reads, in one-letter code: U13-myrmicitoxin-Tb1a (53 aa).

The first 23 residues, 1–23 (MKLIYIFSLVAVIAVTMIPGIMG), serve as a signal peptide directing secretion. A propeptide spanning residues 24-29 (EAEAEG) is cleaved from the precursor. A Lysine amide modification is found at lysine 52.

In terms of tissue distribution, expressed by the venom gland.

It is found in the secreted. In terms of biological role, in vivo, this neurotoxin paralyzes about 70% of blowflies (L.caesar) one hour after intrathoracic injection, when tested at high doses (45 nmol/g). The polypeptide is U13-myrmicitoxin-Tb1a (Tetramorium bicarinatum (Tramp ant)).